Consider the following 288-residue polypeptide: Energy-coupling factor transporter ATP-binding protein EcfA2 (288 aa).

One can recognise an ABC transporter domain in the interval 2-244; the sequence is IKFEKVNYTY…VDFLKAHELG (243 aa). Position 39 to 46 (39 to 46) interacts with ATP; that stretch reads GHTGSGKS.

It belongs to the ABC transporter superfamily. Energy-coupling factor EcfA family. In terms of assembly, forms a stable energy-coupling factor (ECF) transporter complex composed of 2 membrane-embedded substrate-binding proteins (S component), 2 ATP-binding proteins (A component) and 2 transmembrane proteins (T component).

The protein localises to the cell membrane. Functionally, ATP-binding (A) component of a common energy-coupling factor (ECF) ABC-transporter complex. Unlike classic ABC transporters this ECF transporter provides the energy necessary to transport a number of different substrates. In Lactococcus lactis subsp. lactis (strain IL1403) (Streptococcus lactis), this protein is Energy-coupling factor transporter ATP-binding protein EcfA2.